Reading from the N-terminus, the 179-residue chain is MARLKDVYLKTVAPALFKDFGFKSPMQVPRITKIVINIGLGEALQNPKAVEAAIGDLTMIAGQKPVVTRAKKSLAAFKLRQGMPIGAMVTLRNDRMYDFYDRLVNLALPRIRDFQGLSRKSFDGRGNYSIGIREQIIFPEIEYDKVDKIRGLEVAIVTTAPNDEQGFALLKALGMPFRD.

Belongs to the universal ribosomal protein uL5 family. In terms of assembly, part of the 50S ribosomal subunit; part of the 5S rRNA/L5/L18/L25 subcomplex. Contacts the 5S rRNA and the P site tRNA. Forms a bridge to the 30S subunit in the 70S ribosome.

Functionally, this is one of the proteins that bind and probably mediate the attachment of the 5S RNA into the large ribosomal subunit, where it forms part of the central protuberance. In the 70S ribosome it contacts protein S13 of the 30S subunit (bridge B1b), connecting the 2 subunits; this bridge is implicated in subunit movement. Contacts the P site tRNA; the 5S rRNA and some of its associated proteins might help stabilize positioning of ribosome-bound tRNAs. The chain is Large ribosomal subunit protein uL5 from Herpetosiphon aurantiacus (strain ATCC 23779 / DSM 785 / 114-95).